Reading from the N-terminus, the 161-residue chain is 2-C-methyl-D-erythritol 2,4-cyclodiphosphate synthase (161 aa).

Aspartate 11 and histidine 13 together coordinate a divalent metal cation. 4-CDP-2-C-methyl-D-erythritol 2-phosphate is bound by residues 11–13 (DIH) and 37–38 (HS). Histidine 45 lines the a divalent metal cation pocket. 4-CDP-2-C-methyl-D-erythritol 2-phosphate is bound by residues 59-61 (DIG) and 135-138 (TTNE).

The protein belongs to the IspF family. As to quaternary structure, homotrimer. A divalent metal cation serves as cofactor.

The enzyme catalyses 4-CDP-2-C-methyl-D-erythritol 2-phosphate = 2-C-methyl-D-erythritol 2,4-cyclic diphosphate + CMP. It functions in the pathway isoprenoid biosynthesis; isopentenyl diphosphate biosynthesis via DXP pathway; isopentenyl diphosphate from 1-deoxy-D-xylulose 5-phosphate: step 4/6. Functionally, involved in the biosynthesis of isopentenyl diphosphate (IPP) and dimethylallyl diphosphate (DMAPP), two major building blocks of isoprenoid compounds. Catalyzes the conversion of 4-diphosphocytidyl-2-C-methyl-D-erythritol 2-phosphate (CDP-ME2P) to 2-C-methyl-D-erythritol 2,4-cyclodiphosphate (ME-CPP) with a corresponding release of cytidine 5-monophosphate (CMP). The polypeptide is 2-C-methyl-D-erythritol 2,4-cyclodiphosphate synthase (Acaryochloris marina (strain MBIC 11017)).